A 542-amino-acid chain; its full sequence is Calcium-dependent protein kinase 7 (542 aa).

Glycine 2 carries N-myristoyl glycine lipidation. The Protein kinase domain occupies 79 to 337 (YIIGRKLGQG…AHEVLRHPWI (259 aa)). Residues 85-93 (LGQGQFGTT) and lysine 108 each bind ATP. Catalysis depends on aspartate 203, which acts as the Proton acceptor. An autoinhibitory domain region spans residues 343–373 (ATDQALDPSVISRLKQFSAMNKLKKLALRVI). The EF-hand 1 domain occupies 380–415 (EEIAGLREMFKAVDTKNRGVITFGELREGLRRFGAE). The Ca(2+) site is built by aspartate 393, glutamate 404, aspartate 431, asparagine 433, threonine 435, glutamate 440, aspartate 465, aspartate 467, serine 469, tyrosine 471, lysine 476, aspartate 499, asparagine 501, aspartate 503, glutamine 505, and glutamate 510. Residues 416–451 (FKDTEIGDIMEAAHNDNNVTIHYEEFIAATLPLNKI) enclose the EF-hand 2; degenerate domain. 2 EF-hand domains span residues 452-487 (EREE…HNME) and 488-521 (DSLL…SNVG).

Belongs to the protein kinase superfamily. Ser/Thr protein kinase family. CDPK subfamily. Expressed in roots. Expressed in leaf sheaths.

Its subcellular location is the membrane. The protein resides in the cytoplasm. The protein localises to the cytosol. It catalyses the reaction L-seryl-[protein] + ATP = O-phospho-L-seryl-[protein] + ADP + H(+). The catalysed reaction is L-threonyl-[protein] + ATP = O-phospho-L-threonyl-[protein] + ADP + H(+). Activated by calcium. Autophosphorylation may play an important role in the regulation of the kinase activity. Functionally, may play a role in signal transduction pathways that involve calcium as a second messenger. May be a signaling component in the response to gibberellin and cold stress. The chain is Calcium-dependent protein kinase 7 from Oryza sativa subsp. japonica (Rice).